We begin with the raw amino-acid sequence, 281 residues long: Formamidopyrimidine-DNA glycosylase (281 aa).

The active-site Schiff-base intermediate with DNA is proline 2. The Proton donor role is filled by glutamate 3. Lysine 58 serves as the catalytic Proton donor; for beta-elimination activity. Positions 100, 119, and 160 each coordinate DNA. The FPG-type zinc finger occupies 245–281 (RVYGREGAPCPTPGCTGTVQRIVQSGRSSFFCPLCQQ). The active-site Proton donor; for delta-elimination activity is arginine 271.

This sequence belongs to the FPG family. As to quaternary structure, monomer. Requires Zn(2+) as cofactor.

It carries out the reaction Hydrolysis of DNA containing ring-opened 7-methylguanine residues, releasing 2,6-diamino-4-hydroxy-5-(N-methyl)formamidopyrimidine.. It catalyses the reaction 2'-deoxyribonucleotide-(2'-deoxyribose 5'-phosphate)-2'-deoxyribonucleotide-DNA = a 3'-end 2'-deoxyribonucleotide-(2,3-dehydro-2,3-deoxyribose 5'-phosphate)-DNA + a 5'-end 5'-phospho-2'-deoxyribonucleoside-DNA + H(+). Involved in base excision repair of DNA damaged by oxidation or by mutagenic agents. Acts as a DNA glycosylase that recognizes and removes damaged bases. Has a preference for oxidized purines, such as 7,8-dihydro-8-oxoguanine (8-oxoG). Has AP (apurinic/apyrimidinic) lyase activity and introduces nicks in the DNA strand. Cleaves the DNA backbone by beta-delta elimination to generate a single-strand break at the site of the removed base with both 3'- and 5'-phosphates. This is Formamidopyrimidine-DNA glycosylase from Paracoccus denitrificans (strain Pd 1222).